Consider the following 202-residue polypeptide: Small ribosomal subunit protein uS4c (202 aa).

Residues 90–154 enclose the S4 RNA-binding domain; the sequence is MRLDNIIFRL…SQSIIIKNLN (65 aa).

This sequence belongs to the universal ribosomal protein uS4 family. As to quaternary structure, part of the 30S ribosomal subunit. Contacts protein S5. The interaction surface between S4 and S5 is involved in control of translational fidelity.

Its subcellular location is the plastid. It localises to the chloroplast. Its function is as follows. One of the primary rRNA binding proteins, it binds directly to 16S rRNA where it nucleates assembly of the body of the 30S subunit. With S5 and S12 plays an important role in translational accuracy. In Marchantia polymorpha (Common liverwort), this protein is Small ribosomal subunit protein uS4c (rps4).